Reading from the N-terminus, the 639-residue chain is Kinesin-like protein KIF22 (639 aa).

The 328-residue stretch at 18-345 (RVRVAVRLRP…LNFAAKSKQI (328 aa)) folds into the Kinesin motor domain. 102 to 109 (GPTGAGKT) is a binding site for ATP. Residues 358–400 (IAALPAMKRPREEAETAAGSRQRKKSKTDSTESSPNTSMDAAS) form a disordered region. A compositionally biased stretch (polar residues) spans 388–397 (TESSPNTSMD). A coiled-coil region spans residues 439-484 (KRERMALLKKWEESQMEIERLKEKQKELEQKAIEAEARLEKSTNSD). The short motif at 549 to 552 (GREN) is the Important for regulated proteolytic degradation element.

Belongs to the TRAFAC class myosin-kinesin ATPase superfamily. Kinesin family. In terms of processing, ubiquitinated, leading to its subsequent proteasomal degradation.

Its subcellular location is the nucleus. It is found in the cytoplasm. The protein localises to the cytoskeleton. Functionally, kinesin family member that is involved in spindle formation and the movements of chromosomes during mitosis and meiosis. Binds to microtubules and to DNA. In Xenopus tropicalis (Western clawed frog), this protein is Kinesin-like protein KIF22 (kif22).